The sequence spans 449 residues: Asparagine--tRNA ligase (449 aa).

The protein belongs to the class-II aminoacyl-tRNA synthetase family. As to quaternary structure, homodimer.

The protein localises to the cytoplasm. It carries out the reaction tRNA(Asn) + L-asparagine + ATP = L-asparaginyl-tRNA(Asn) + AMP + diphosphate + H(+). This Mesomycoplasma hyopneumoniae (strain 232) (Mycoplasma hyopneumoniae) protein is Asparagine--tRNA ligase.